A 485-amino-acid polypeptide reads, in one-letter code: Protein disulfide-isomerase 1 (485 aa).

A signal peptide spans 1-20; it reads MSLSVSFIFLLVASIGAVVA. Thioredoxin domains are found at residues 21–130 and 342–470; these read DSEN…KKSG and YLEG…KYAG. Intrachain disulfides connect Cys-52-Cys-55 and Cys-393-Cys-396. Catalysis depends on nucleophile residues Cys-393 and Cys-396. Residues 482 to 485 carry the Prevents secretion from ER motif; that stretch reads HEEL.

This sequence belongs to the protein disulfide isomerase family.

The protein localises to the endoplasmic reticulum lumen. The enzyme catalyses Catalyzes the rearrangement of -S-S- bonds in proteins.. This chain is Protein disulfide-isomerase 1 (pdi-1), found in Caenorhabditis elegans.